We begin with the raw amino-acid sequence, 421 residues long: C2H2 type master regulator of conidiophore development brlA (421 aa).

The span at 228 to 242 shows a compositional bias: polar residues; the sequence is THSPTTPLRSCSIGT. Residues 228–247 are disordered; sequence THSPTTPLRSCSIGTASGPD. 2 C2H2-type zinc fingers span residues 309-333 and 339-364; these read FKCKEPGCKGRFKRQEHLKRHMKSH and HVCWVPGCERAFSRSDNLNAHYTKTH. The segment covering 361-370 has biased composition (basic residues); it reads TKTHSKRGGR. Residues 361–421 are disordered; sequence TKTHSKRGGR…REYSVDGLDD (61 aa).

The protein resides in the nucleus. Its function is as follows. BrlA, abaA and wetA are pivotal regulators of conidiophore development and conidium maturation. They act individually and together to regulate their own expression and that of numerous other sporulation-specific genes. Binds promoters of target genes at brlA response elements (BREs) containing the conserved sequence 5'-(C/A)(A/G)AGGG(G/A)-3'. This chain is C2H2 type master regulator of conidiophore development brlA, found in Aspergillus parasiticus (strain ATCC 56775 / NRRL 5862 / SRRC 143 / SU-1).